The primary structure comprises 2048 residues: Myoferlin (2048 aa).

One can recognise a C2 1 domain in the interval 1–101 (MLRVIVESAT…IGDQNRSLPY (101 aa)). Topologically, residues 1–2012 (MLRVIVESAT…MRFIVWRRFK (2012 aa)) are cytoplasmic. The interval 124-176 (YTPPSAPHPNDPSGTSVPGMGEEEEEDQGDEDRVDGIVRGPGPKGPSGTVSEA) is disordered. Residues 144 to 156 (GEEEEEDQGDEDR) are compositionally biased toward acidic residues. 2 positions are modified to phosphoserine: S170 and S174. 2 C2 domains span residues 183–300 (TKGK…RKWL) and 339–475 (DSDD…EATT). The segment at 186-281 (KSSRRMLSNK…RADCLMGEFK (96 aa)) is necessary for interaction with EHD2. Positions 390, 396, 444, 446, and 452 each coordinate Ca(2+). K540 and K871 each carry N6-acetyllysine. C2 domains follow at residues 1110–1238 (GANT…LLWH) and 1269–1397 (LPSQ…GKED). Ca(2+) contacts are provided by D1142, D1148, D1204, and D1206. K1494 carries the post-translational modification N6-acetyllysine. C2 domains lie at 1523 to 1641 (PAPP…SHCG) and 1759 to 1907 (GPPG…EKCS). Residues D1556, D1562, D1611, D1613, D1878, S1881, and D1884 each contribute to the Ca(2+) site. Positions 1964–1975 (EADERPAGKGRS) are enriched in basic and acidic residues. The disordered stretch occupies residues 1964 to 1986 (EADERPAGKGRSEPNMNPKLDPP). The chain crosses the membrane as a helical span at residues 2013–2033 (WVIIGLLLLLILLLFVAVLLY). Residues 2034–2048 (SLPNYLSMKIVRPNA) are Extracellular-facing.

It belongs to the ferlin family. Interacts with EHD1. Interacts with EHD2; the interaction is direct. Interacts with DNM2 and KDR. Interacts with RIPOR2. Ca(2+) serves as cofactor. Expressed in myoblasts (at protein level). Expressed in endothelial cells.

The protein localises to the cell membrane. It localises to the nucleus membrane. It is found in the cytoplasmic vesicle membrane. Functionally, calcium/phospholipid-binding protein that plays a role in the plasmalemma repair mechanism of endothelial cells that permits rapid resealing of membranes disrupted by mechanical stress. Involved in endocytic recycling. Implicated in VEGF signal transduction by regulating the levels of the receptor KDR. The protein is Myoferlin (Myof) of Mus musculus (Mouse).